We begin with the raw amino-acid sequence, 490 residues long: Hydroxysteroid dehydrogenase-like protein 2 (490 aa).

NADP(+) is bound by residues 17-23 (GASRGIG), lysine 42, and aspartate 74. Lysine 42 carries the N6-(2-hydroxyisobutyryl)lysine modification. Residue lysine 116 is modified to N6-acetyllysine. Tyrosine 168 functions as the Proton acceptor in the catalytic mechanism. NADP(+) is bound at residue lysine 172. The span at 282–301 (MEEKESNDSVPEVKEEKLQL) shows a compositional bias: basic and acidic residues. The disordered stretch occupies residues 282–370 (MEEKESNDSV…PRQQPQPFVQ (89 aa)). Residues 302 to 367 (QEESQLQKQP…QPRPRQQPQP (66 aa)) show a composition bias toward low complexity. The 108-residue stretch at 380–487 (GAVEETFRIV…KLEKLMTQMN (108 aa)) folds into the SCP2 domain. Lysine 390 carries the post-translational modification N6-succinyllysine.

The protein belongs to the short-chain dehydrogenases/reductases (SDR) family. Widely expressed.

The protein resides in the peroxisome. Its subcellular location is the mitochondrion. Has apparently no steroid dehydrogenase activity. Controls bile acid (BA) and lipid metabolism in response to nutritional cues. The polypeptide is Hydroxysteroid dehydrogenase-like protein 2 (Hsdl2) (Mus musculus (Mouse)).